Reading from the N-terminus, the 145-residue chain is D-aminoacyl-tRNA deacylase (145 aa).

Residues 137-138 carry the Gly-cisPro motif, important for rejection of L-amino acids motif; the sequence is GP.

The protein belongs to the DTD family. Homodimer.

The protein resides in the cytoplasm. The enzyme catalyses glycyl-tRNA(Ala) + H2O = tRNA(Ala) + glycine + H(+). The catalysed reaction is a D-aminoacyl-tRNA + H2O = a tRNA + a D-alpha-amino acid + H(+). An aminoacyl-tRNA editing enzyme that deacylates mischarged D-aminoacyl-tRNAs. Also deacylates mischarged glycyl-tRNA(Ala), protecting cells against glycine mischarging by AlaRS. Acts via tRNA-based rather than protein-based catalysis; rejects L-amino acids rather than detecting D-amino acids in the active site. By recycling D-aminoacyl-tRNA to D-amino acids and free tRNA molecules, this enzyme counteracts the toxicity associated with the formation of D-aminoacyl-tRNA entities in vivo and helps enforce protein L-homochirality. The protein is D-aminoacyl-tRNA deacylase of Pseudomonas putida (strain ATCC 700007 / DSM 6899 / JCM 31910 / BCRC 17059 / LMG 24140 / F1).